The sequence spans 88 residues: Small ribosomal subunit protein bS20 (88 aa).

Over residues 1–17 (MANIKSNEKRLRQDIKR) the composition is skewed to basic and acidic residues. The disordered stretch occupies residues 1-25 (MANIKSNEKRLRQDIKRNLNNKGQK).

Belongs to the bacterial ribosomal protein bS20 family.

Its function is as follows. Binds directly to 16S ribosomal RNA. The chain is Small ribosomal subunit protein bS20 from Mycoplasma genitalium (strain ATCC 33530 / DSM 19775 / NCTC 10195 / G37) (Mycoplasmoides genitalium).